The sequence spans 237 residues: Probable GTP-binding protein EngB (237 aa).

The EngB-type G domain occupies 23–209 (AVPEVAFAGR…QAVIAGWLNL (187 aa)). GTP contacts are provided by residues 31–38 (GRSNAGKS), 58–62 (GRTQH), 82–85 (DLPG), 149–152 (TKAD), and 187–190 (LFSS). Mg(2+) contacts are provided by Ser38 and Thr60. Positions 214-237 (KAEREPAAANSVPPAVPPASDPAA) are disordered. Positions 227-237 (PAVPPASDPAA) are enriched in pro residues.

This sequence belongs to the TRAFAC class TrmE-Era-EngA-EngB-Septin-like GTPase superfamily. EngB GTPase family. Mg(2+) serves as cofactor.

Functionally, necessary for normal cell division and for the maintenance of normal septation. The polypeptide is Probable GTP-binding protein EngB (Cupriavidus taiwanensis (strain DSM 17343 / BCRC 17206 / CCUG 44338 / CIP 107171 / LMG 19424 / R1) (Ralstonia taiwanensis (strain LMG 19424))).